The following is a 295-amino-acid chain: MDNKLDVFRRELVDVEGIPLFWSIAEHWSQVESFEARPDDILISTYPKSGTTWVSEILDLIYNNGDAEKCKRDAIYKRVPFMELIIPGITNGVEMLNNMPSPRIVKTHLPVQLLPSSFWKNDCKIIYVARNAKDVVVSYYYFYQMAKIHPEPGTWEEFLEKFMAGQVSFGPWYDHVKSWWEKRKEYRILYLFYEDMKENPKCEIQKILKFLEKDIPEEILNKILYHSSFSVMKENPSANYTTMMKEEMDHSVSPFMRKGISGDWKNQFTVAQYEKFEEDYVKKMEDSTLKFRSEI.

Residue 48–53 (KSGTTW) participates in 3'-phosphoadenylyl sulfate binding. Residues Phe81 and 106 to 108 (KTH) each bind substrate. The active-site Proton acceptor is the His108. Residues Arg130 and Ser138 each coordinate 3'-phosphoadenylyl sulfate. Phe142 lines the substrate pocket. 3'-phosphoadenylyl sulfate-binding positions include Tyr193, 227-232 (SSFSVM), and 257-259 (RKG).

The protein belongs to the sulfotransferase 1 family. As to expression, detected in kidney and liver. Detected in kidney collecting duct cells.

It is found in the cytoplasm. Functionally, sulfotransferase with broad substrate specificity that utilizes 3'-phospho-5'-adenylyl sulfate (PAPS) as sulfonate donor to catalyze the sulfate conjugation of catecholamines, such as dopamine, prostaglandins, leukotriene E4, drugs and xenobiotic compounds. Has sulfotransferase activity towards p-nitrophenol, 2-naphthylamine and minoxidil (in vitro). Sulfonation increases the water solubility of most compounds, and therefore their renal excretion, but it can also result in bioactivation to form active metabolites. The sequence is that of Sulfotransferase 1 family member D1 (Sult1d1) from Mus musculus (Mouse).